The primary structure comprises 371 residues: Leu/Ile/Val-binding protein homolog 1 (371 aa).

An N-terminal signal peptide occupies residues 1 to 23 (MRKTLFSGVALAAVIAFGGSAWA).

It belongs to the leucine-binding protein family.

Its function is as follows. Component of an amino-acid transport system. The sequence is that of Leu/Ile/Val-binding protein homolog 1 from Brucella suis biovar 1 (strain 1330).